Here is a 239-residue protein sequence, read N- to C-terminus: Tetratricopeptide repeat protein 9B (239 aa).

The interval 1–54 is disordered; that stretch reads MQRGALSPVLMLSAAPEPPPRPPPALSPPGPGSAPRHGSARSGPAPEPSGGLAA. Phosphoserine occurs at positions 7 and 27. The segment covering 16 to 32 has biased composition (pro residues); the sequence is PEPPPRPPPALSPPGPG. The TPR 1 repeat unit spans residues 63–97; that stretch reads AVAFKAEGQRCYREKKFREAIGKYHRALLQLKAAQ. The tract at residues 98 to 121 is disordered; that stretch reads GARPGGLPTPSPGPTTSPGPARLS. Residues 104–114 are compositionally biased toward pro residues; it reads LPTPSPGPTTS. The stretch at 169–202 is one TPR 2 repeat; that stretch reads FKATYRAGIAFYHLGDYARALRYLQEARSREPTD.

Belongs to the TTC9 family.

This Mus musculus (Mouse) protein is Tetratricopeptide repeat protein 9B (Ttc9b).